Reading from the N-terminus, the 353-residue chain is UPF0283 membrane protein YcjF (353 aa).

The segment covering 1–19 (MSEPLKPRIDFAEPLKEES) has biased composition (basic and acidic residues). The interval 1-29 (MSEPLKPRIDFAEPLKEESTSTFKAQQTF) is disordered. Over residues 20 to 29 (TSTFKAQQTF) the composition is skewed to polar residues. 3 helical membrane-spanning segments follow: residues 70–90 (MVLG…IQWT), 100–120 (AALG…GSVI), and 213–233 (ESTL…FIAW).

Belongs to the UPF0283 family.

The protein localises to the cell inner membrane. The protein is UPF0283 membrane protein YcjF of Salmonella arizonae (strain ATCC BAA-731 / CDC346-86 / RSK2980).